The chain runs to 941 residues: Isoleucine--tRNA ligase (941 aa).

A 'HIGH' region motif is present at residues 59–69 (PYANGNIHIGH). Residue glutamate 562 participates in L-isoleucyl-5'-AMP binding. The short motif at 603-607 (KMSKS) is the 'KMSKS' region element. Lysine 606 is a binding site for ATP. Zn(2+) is bound by residues cysteine 904, cysteine 907, cysteine 924, and cysteine 927.

This sequence belongs to the class-I aminoacyl-tRNA synthetase family. IleS type 1 subfamily. In terms of assembly, monomer. Zn(2+) serves as cofactor.

The protein resides in the cytoplasm. The catalysed reaction is tRNA(Ile) + L-isoleucine + ATP = L-isoleucyl-tRNA(Ile) + AMP + diphosphate. In terms of biological role, catalyzes the attachment of isoleucine to tRNA(Ile). As IleRS can inadvertently accommodate and process structurally similar amino acids such as valine, to avoid such errors it has two additional distinct tRNA(Ile)-dependent editing activities. One activity is designated as 'pretransfer' editing and involves the hydrolysis of activated Val-AMP. The other activity is designated 'posttransfer' editing and involves deacylation of mischarged Val-tRNA(Ile). In Haemophilus influenzae (strain ATCC 51907 / DSM 11121 / KW20 / Rd), this protein is Isoleucine--tRNA ligase.